Reading from the N-terminus, the 119-residue chain is Lamprin 1.8-10 (119 aa).

Residues 1-19 (MAATMQALLVIALLHLATA) form the signal peptide. Tandem repeats lie at residues 41 to 45 (GGLGY), 46 to 50 (GGLGY), 51 to 55 (GGLGY), 56 to 60 (GGLGV), 61 to 65 (AGLGY), 66 to 70 (GGLGY), and 86 to 90 (GGLGY). Positions 41 to 90 (GGLGYGGLGYGGLGYGGLGVAGLGYGGLGYPGAALGGAYTHHAALGGLGY) are 7 X 5 AA approximate repeats.

As to quaternary structure, the polymeric lamprin chains self-aggregate to form fibers and have secondary structures particularly rich in beta-sheets and in beta-turns.

The protein resides in the secreted. It is found in the extracellular space. Its subcellular location is the extracellular matrix. Functionally, self-aggregating protein that is part of the soluble form of lamprin. In Petromyzon marinus (Sea lamprey), this protein is Lamprin 1.8-10.